Consider the following 405-residue polypeptide: Double C2-like domain-containing protein alpha (405 aa).

Residues 1–94 (MRGRRGDRMT…DSYDSDDTTA (94 aa)) form an interaction with UNC13D and DYNLT1 region. The disordered stretch occupies residues 34–54 (DYFPRRGPGPEGGGGGGGTGC). Residues 42–54 (GPEGGGGGGGTGC) show a composition bias toward gly residues. 2 C2 domains span residues 94-216 (ALGT…HFNI) and 256-389 (ERGR…ERWH). The Ca(2+) site is built by aspartate 125, aspartate 131, aspartate 186, aspartate 188, aspartate 287, aspartate 293, aspartate 347, aspartate 349, and aspartate 355. The segment at 220-405 (RQVPLPSPSS…PPAAGAYPLA (186 aa)) is interaction with UNC13D.

As to quaternary structure, interacts (via N-terminus) with UNC13A. Interacts with cytoplasmic dynein light chain DYNLT1. Interacts with UNC13D. Ca(2+) is required as a cofactor. Brain and mast cells.

Its subcellular location is the cytoplasmic vesicle. It is found in the secretory vesicle. It localises to the synaptic vesicle membrane. The protein resides in the synapse. The protein localises to the synaptosome. Its subcellular location is the lysosome. Its function is as follows. Calcium sensor which most probably regulates fusion of vesicles with membranes. Binds calcium and phospholipids. May be involved in calcium dependent neurotransmitter release through the interaction with UNC13A. May be involved in calcium-dependent spontaneous release of neurotransmitter in absence of action potentials in neuronal cells. Regulates Ca(2+)-dependent secretory lysosome exocytosis in mast cells. This is Double C2-like domain-containing protein alpha (Doc2a) from Mus musculus (Mouse).